The following is a 312-amino-acid chain: 4-hydroxy-3-methylbut-2-enyl diphosphate reductase (312 aa).

Cys14 contacts [4Fe-4S] cluster. Residues His43 and His76 each coordinate (2E)-4-hydroxy-3-methylbut-2-enyl diphosphate. Residues His43 and His76 each coordinate dimethylallyl diphosphate. Residues His43 and His76 each contribute to the isopentenyl diphosphate site. Cys98 is a binding site for [4Fe-4S] cluster. His125 is a binding site for (2E)-4-hydroxy-3-methylbut-2-enyl diphosphate. A dimethylallyl diphosphate-binding site is contributed by His125. Isopentenyl diphosphate is bound at residue His125. The active-site Proton donor is the Glu127. Thr165 serves as a coordination point for (2E)-4-hydroxy-3-methylbut-2-enyl diphosphate. Residue Cys195 participates in [4Fe-4S] cluster binding. Positions 223, 224, 225, and 269 each coordinate (2E)-4-hydroxy-3-methylbut-2-enyl diphosphate. Ser223, Ser224, Asn225, and Ser269 together coordinate dimethylallyl diphosphate. Residues Ser223, Ser224, Asn225, and Ser269 each coordinate isopentenyl diphosphate.

It belongs to the IspH family. The cofactor is [4Fe-4S] cluster.

The catalysed reaction is isopentenyl diphosphate + 2 oxidized [2Fe-2S]-[ferredoxin] + H2O = (2E)-4-hydroxy-3-methylbut-2-enyl diphosphate + 2 reduced [2Fe-2S]-[ferredoxin] + 2 H(+). The enzyme catalyses dimethylallyl diphosphate + 2 oxidized [2Fe-2S]-[ferredoxin] + H2O = (2E)-4-hydroxy-3-methylbut-2-enyl diphosphate + 2 reduced [2Fe-2S]-[ferredoxin] + 2 H(+). It functions in the pathway isoprenoid biosynthesis; dimethylallyl diphosphate biosynthesis; dimethylallyl diphosphate from (2E)-4-hydroxy-3-methylbutenyl diphosphate: step 1/1. The protein operates within isoprenoid biosynthesis; isopentenyl diphosphate biosynthesis via DXP pathway; isopentenyl diphosphate from 1-deoxy-D-xylulose 5-phosphate: step 6/6. In terms of biological role, catalyzes the conversion of 1-hydroxy-2-methyl-2-(E)-butenyl 4-diphosphate (HMBPP) into a mixture of isopentenyl diphosphate (IPP) and dimethylallyl diphosphate (DMAPP). Acts in the terminal step of the DOXP/MEP pathway for isoprenoid precursor biosynthesis. This chain is 4-hydroxy-3-methylbut-2-enyl diphosphate reductase, found in Leptospira interrogans serogroup Icterohaemorrhagiae serovar copenhageni (strain Fiocruz L1-130).